A 430-amino-acid chain; its full sequence is Serine--tRNA ligase (430 aa).

231-233 contacts L-serine; sequence TSE. An ATP-binding site is contributed by 262 to 264; it reads RSE. E285 is a binding site for L-serine. 349–352 is a binding site for ATP; sequence EISS. S385 lines the L-serine pocket.

The protein belongs to the class-II aminoacyl-tRNA synthetase family. Type-1 seryl-tRNA synthetase subfamily. In terms of assembly, homodimer. The tRNA molecule binds across the dimer.

The protein localises to the cytoplasm. The catalysed reaction is tRNA(Ser) + L-serine + ATP = L-seryl-tRNA(Ser) + AMP + diphosphate + H(+). It carries out the reaction tRNA(Sec) + L-serine + ATP = L-seryl-tRNA(Sec) + AMP + diphosphate + H(+). The protein operates within aminoacyl-tRNA biosynthesis; selenocysteinyl-tRNA(Sec) biosynthesis; L-seryl-tRNA(Sec) from L-serine and tRNA(Sec): step 1/1. Catalyzes the attachment of serine to tRNA(Ser). Is also able to aminoacylate tRNA(Sec) with serine, to form the misacylated tRNA L-seryl-tRNA(Sec), which will be further converted into selenocysteinyl-tRNA(Sec). The protein is Serine--tRNA ligase of Jannaschia sp. (strain CCS1).